The sequence spans 126 residues: Holo-[acyl-carrier-protein] synthase (126 aa).

Mg(2+)-binding residues include D9 and E58.

It belongs to the P-Pant transferase superfamily. AcpS family. Mg(2+) serves as cofactor.

Its subcellular location is the cytoplasm. The catalysed reaction is apo-[ACP] + CoA = holo-[ACP] + adenosine 3',5'-bisphosphate + H(+). Transfers the 4'-phosphopantetheine moiety from coenzyme A to a Ser of acyl-carrier-protein. The polypeptide is Holo-[acyl-carrier-protein] synthase (Salmonella agona (strain SL483)).